Reading from the N-terminus, the 252-residue chain is Chaplin-A (252 aa).

The N-terminal stretch at 1 to 20 (MVAAAAATGILSLCGSPALA) is a signal peptide. The Chaplin 1 domain maps to 31 to 71 (SPGAVSGNALQVPVDVPVNACGNTVDVIAALNPAFGNECEN). Disordered stretches follow at residues 71–121 (NASD…GNNA) and 150–224 (CEND…GSEG). Residues 86-108 (EDASSSSSSSTSASSSGSHADGA) are compositionally biased toward low complexity. Residues 112–152 (SPGVGSGNNAQVPVDVPVNLCGNTVDVIAALNPVFGNKCEN) form the Chaplin 2 domain. Residues 153 to 165 (DAEEPPGYGEEEP) show a composition bias toward acidic residues. The segment covering 210–224 (QTEQPPALAETGSEG) has biased composition (low complexity). Positions 217–221 (LAETG) match the LPXTG sorting signal motif. Propeptides (removed by sortase) lie at residues 219–252 (ETGSEGTLGAAAAGAVLIAGGAILYRRGRALSGR) and 221–252 (GSEGTLGAAAAGAVLIAGGAILYRRGRALSGR). At Thr-220 the chain carries Pentaglycyl murein peptidoglycan amidated threonine.

It belongs to the chaplin family. Long chaplin subfamily.

The protein resides in the secreted. It is found in the cell wall. One of 8 partially redundant surface-active proteins required for efficient formation of aerial mycelium; the short chaplins assemble into a hydrophobic, amyloidal fibrillar surface layer that envelopes and protects aerial hyphae and spores, presumably anchored to the long chaplins. Chaplins have an overlapping function with the surface-active SapB peptide; chaplins are essential on minimal medium while on rich medium both chaplins and SapB are required for efficient aerial hyphae formation. A minimal chaplin strain capable of forming aerial mycelium/hyphae on minimal medium contains ChpC, ChpE and ChpH. The strain also has restored rodlet formation on the hyphae surface. A second minimal chaplin strain with ChpA, ChpD and ChpE makes slightly less robust hyphae. The long chaplins (ChpA, ChpB, ChpC) are not absolutely necessary for short chaplin localization or rodlet formation, but probably play a role in initiating aerial hyphae development. Chaplins are also involved in cell attachment to a hydrophobic surface. The sequence is that of Chaplin-A from Streptomyces coelicolor (strain ATCC BAA-471 / A3(2) / M145).